The sequence spans 193 residues: Phosphoheptose isomerase (193 aa).

The 157-residue stretch at 37–193 (IAQSFKNEKK…LIIEKEMQKN (157 aa)) folds into the SIS domain. 52–54 (NGG) provides a ligand contact to substrate. Positions 61 and 65 each coordinate Zn(2+). Substrate contacts are provided by residues glutamate 65, 93–94 (ND), 119–121 (STS), serine 124, and glutamine 172. Zn(2+) is bound by residues glutamine 172 and histidine 180.

This sequence belongs to the SIS family. GmhA subfamily. As to quaternary structure, homotetramer. It depends on Zn(2+) as a cofactor.

It localises to the cytoplasm. The catalysed reaction is 2 D-sedoheptulose 7-phosphate = D-glycero-alpha-D-manno-heptose 7-phosphate + D-glycero-beta-D-manno-heptose 7-phosphate. Its pathway is carbohydrate biosynthesis; D-glycero-D-manno-heptose 7-phosphate biosynthesis; D-glycero-alpha-D-manno-heptose 7-phosphate and D-glycero-beta-D-manno-heptose 7-phosphate from sedoheptulose 7-phosphate: step 1/1. Its function is as follows. Catalyzes the isomerization of sedoheptulose 7-phosphate in D-glycero-D-manno-heptose 7-phosphate. This chain is Phosphoheptose isomerase, found in Buchnera aphidicola subsp. Acyrthosiphon pisum (strain 5A).